Here is a 398-residue protein sequence, read N- to C-terminus: L-glutamine--4-(methylsulfanyl)-2-oxobutanoate aminotransferase (398 aa).

Lys240 bears the N6-(pyridoxal phosphate)lysine mark.

The protein belongs to the class-I pyridoxal-phosphate-dependent aminotransferase family. MtnE subfamily. The cofactor is pyridoxal 5'-phosphate.

It catalyses the reaction 4-methylsulfanyl-2-oxobutanoate + L-glutamine = 2-oxoglutaramate + L-methionine. The protein operates within amino-acid biosynthesis; L-methionine biosynthesis via salvage pathway; L-methionine from S-methyl-5-thio-alpha-D-ribose 1-phosphate: step 6/6. Involved in the methylthioribose (MTR) recycling pathway. Catalyzes the formation of methionine from 2-keto-4-methylthiobutyrate (KMTB). This chain is L-glutamine--4-(methylsulfanyl)-2-oxobutanoate aminotransferase, found in Bacillus subtilis (strain 168).